Consider the following 864-residue polypeptide: Arf-GAP with GTPase, ANK repeat and PH domain-containing protein 1 (864 aa).

The segment at 66 to 276 (SRSVPELKVG…QTSNGGGSLS (211 aa)) is small GTPase-like. One can recognise a GLD domain in the interval 67-241 (RSVPELKVGI…TRKKQQLSIG (175 aa)). GTP-binding positions include 78 to 85 (GNLASGKS), 122 to 126 (IRDEG), and 178 to 181 (TQDA). Disordered stretches follow at residues 266 to 343 (SQTS…IGSG), 405 to 455 (VPGK…QMAS), and 499 to 549 (TGLG…LSST). Low complexity predominate over residues 275–289 (LSDYSSSVPSTPSTS). Residues 322–337 (KGSDPDKDKKGLESRA) show a composition bias toward basic and acidic residues. In terms of domain architecture, PH spans 346 to 591 (IPIKQGMLLK…WVQAIESQIL (246 aa)). Residues 413–428 (ATSSCAPVASPKTNGL) are compositionally biased toward polar residues. The span at 507 to 517 (SSPSISSTTSP) shows a compositional bias: low complexity. Over residues 527 to 537 (ANRKKHRRKKS) the composition is skewed to basic residues. Residues 538–549 (TSNFKVDGLSST) are compositionally biased toward polar residues. Residues 612–732 (ALALQSIRNL…LFLSPLPCRD (121 aa)) form the Arf-GAP domain. The C4-type zinc finger occupies 627–650 (CVDCDAQSPDWASLNLGALMCIEC). ANK repeat units lie at residues 771–800 (DRRT…DVMA) and 804–833 (HGNT…PDEQ). The span at 845-854 (KNNRNNNSNA) shows a compositional bias: low complexity. The segment at 845 to 864 (KNNRNNNSNAGGSGLMPTLI) is disordered.

It belongs to the centaurin gamma-like family. In terms of assembly, homodimer. Interacts with several subunits of the AP-3 protein complex.

It is found in the cytoplasm. Functionally, GTPase-activating protein. Directly and specifically regulates the adapter protein 3 (AP-3)-dependent trafficking of proteins in the endosomal-lysosomal system. The protein is Arf-GAP with GTPase, ANK repeat and PH domain-containing protein 1 (agap1) of Xenopus laevis (African clawed frog).